The chain runs to 824 residues: LPS-assembly protein LptD (824 aa).

Disordered regions lie at residues 1–26 and 67–117; these read MTEQRRSPHHPATRPPAPPGTSRRVR and TQTP…PAYV. Positions 1 to 48 are cleaved as a signal peptide; it reads MTEQRRSPHHPATRPPAPPGTSRRVRLPASALRPLVLAMAGLTVSAHA. The segment covering 98–115 has biased composition (low complexity); sequence NTLNLSPSSTPSNPNAPA.

Belongs to the LptD family. As to quaternary structure, component of the lipopolysaccharide transport and assembly complex. Interacts with LptE and LptA.

It localises to the cell outer membrane. Together with LptE, is involved in the assembly of lipopolysaccharide (LPS) at the surface of the outer membrane. The polypeptide is LPS-assembly protein LptD (Cupriavidus metallidurans (strain ATCC 43123 / DSM 2839 / NBRC 102507 / CH34) (Ralstonia metallidurans)).